A 219-amino-acid chain; its full sequence is Ribose-5-phosphate isomerase A (219 aa).

Residues 28–31 (SGST), 81–84 (DGAD), and 94–97 (KGGG) contribute to the substrate site. Residue Glu103 is the Proton acceptor of the active site. Lys121 contributes to the substrate binding site.

The protein belongs to the ribose 5-phosphate isomerase family. Homodimer.

It catalyses the reaction aldehydo-D-ribose 5-phosphate = D-ribulose 5-phosphate. It functions in the pathway carbohydrate degradation; pentose phosphate pathway; D-ribose 5-phosphate from D-ribulose 5-phosphate (non-oxidative stage): step 1/1. In terms of biological role, catalyzes the reversible conversion of ribose-5-phosphate to ribulose 5-phosphate. This is Ribose-5-phosphate isomerase A from Haemophilus influenzae (strain ATCC 51907 / DSM 11121 / KW20 / Rd).